A 533-amino-acid chain; its full sequence is Glucomannan 4-beta-mannosyltransferase 9 (533 aa).

A helical membrane pass occupies residues 37 to 57 (IVPALRLGVYICLTMSVMLFV). Residue Asp-136 is part of the active site. Asp-195 and Asp-197 together coordinate substrate. Asp-289 is an active-site residue. 4 helical membrane passes run 368–388 (LVAH…TVLV), 404–426 (VITL…WILF), 483–503 (VLEL…AFFG), and 510–530 (YLFA…GTIV).

The protein belongs to the glycosyltransferase 2 family. Plant cellulose synthase-like A subfamily. As to expression, expressed in cotyledons at the base of the hypocotyls, in root elongation zone, lateral root primordia, vascular system of young leaves, abscission zone of the pedicle,.

The protein resides in the golgi apparatus membrane. It carries out the reaction GDP-mannose + (glucomannan)n = GDP + (glucomannan)n+1.. Possesses glucomannan synthase and mannan synthase activities in vitro. Mannan synthase consists of a 4-beta-mannosyltransferase activity on mannan using GDP-mannose. The beta-1,4-mannan product is the backbone for galactomannan synthesis by galactomannan galactosyltransferase. Galactomannan is a noncellulosic polysaccharides of plant cell wall. Required for lateral root development. The polypeptide is Glucomannan 4-beta-mannosyltransferase 9 (Arabidopsis thaliana (Mouse-ear cress)).